A 315-amino-acid polypeptide reads, in one-letter code: Ribosomal RNA small subunit methyltransferase H (315 aa).

Residues 37 to 39 (GGH), Asp-57, Phe-83, Asp-105, and Gln-112 contribute to the S-adenosyl-L-methionine site.

The protein belongs to the methyltransferase superfamily. RsmH family.

The protein localises to the cytoplasm. The catalysed reaction is cytidine(1402) in 16S rRNA + S-adenosyl-L-methionine = N(4)-methylcytidine(1402) in 16S rRNA + S-adenosyl-L-homocysteine + H(+). Its function is as follows. Specifically methylates the N4 position of cytidine in position 1402 (C1402) of 16S rRNA. The sequence is that of Ribosomal RNA small subunit methyltransferase H from Pseudomonas fluorescens (strain ATCC BAA-477 / NRRL B-23932 / Pf-5).